A 304-amino-acid polypeptide reads, in one-letter code: uncharacterized protein (304 aa).

NAD(+) contacts are provided by residues 136–137 (GI), 215–217 (VGR), and aspartate 241. Arginine 217 is an active-site residue. Residue glutamate 246 is part of the active site. The Proton donor role is filled by histidine 265. 265–268 (HTAN) provides a ligand contact to NAD(+).

This sequence belongs to the D-isomer specific 2-hydroxyacid dehydrogenase family.

This is an uncharacterized protein from Corynebacterium melassecola.